We begin with the raw amino-acid sequence, 128 residues long: Azurin (128 aa).

In terms of domain architecture, Plastocyanin-like spans 1 to 128 (AECKVTVDST…SMMKGTVTVK (128 aa)). A disulfide bridge connects residues Cys-3 and Cys-26. 4 residues coordinate Cu cation: His-46, Cys-112, His-117, and Met-121.

It localises to the periplasm. Functionally, transfers electrons from cytochrome c551 to cytochrome oxidase. The protein is Azurin of Pseudomonas fluorescens biotype A.